We begin with the raw amino-acid sequence, 109 residues long: UPF0060 membrane protein RC1_3291 (109 aa).

4 helical membrane-spanning segments follow: residues 4–24, 31–51, 59–79, and 88–108; these read IATYLLAAVAEIGGCFAFWAW, PLWLIPGMASLALFAWALTRI, AYAAYGGIYILTSLVWMWLVE, and TLGTVLCVSGALVIIFGPRGG.

This sequence belongs to the UPF0060 family.

The protein localises to the cell inner membrane. In Rhodospirillum centenum (strain ATCC 51521 / SW), this protein is UPF0060 membrane protein RC1_3291.